The following is a 305-amino-acid chain: Coiled-coil domain-containing protein 50 (305 aa).

An N-acetylalanine modification is found at Ala-2. Ser-5 bears the Phosphoserine mark. Residues 86-130 (EIAQEIQEKLTIEAERRRIQEKKDEDIARLLQEKELQEEKRRKKH) adopt a coiled-coil conformation. Disordered regions lie at residues 122–142 (QEEK…VFGD) and 218–305 (KKAK…HNKQ). Composition is skewed to basic and acidic residues over residues 218–239 (KKAK…ECKL) and 247–263 (KSKE…DRPS). Over residues 279–305 (THFTNQHSTTWHLPKSESSQKGFHNKQ) the composition is skewed to polar residues.

Interacts with RNF126. Phosphorylated on tyrosine residues. Widely expressed.

The protein resides in the cytoplasm. Its function is as follows. Involved in EGFR signaling. This Mus musculus (Mouse) protein is Coiled-coil domain-containing protein 50 (Ccdc50).